Consider the following 231-residue polypeptide: Large ribosomal subunit protein uL1 (231 aa).

This sequence belongs to the universal ribosomal protein uL1 family. In terms of assembly, part of the 50S ribosomal subunit.

Binds directly to 23S rRNA. The L1 stalk is quite mobile in the ribosome, and is involved in E site tRNA release. Functionally, protein L1 is also a translational repressor protein, it controls the translation of the L11 operon by binding to its mRNA. The protein is Large ribosomal subunit protein uL1 of Agrobacterium fabrum (strain C58 / ATCC 33970) (Agrobacterium tumefaciens (strain C58)).